The chain runs to 166 residues: NAD(P)H-quinone oxidoreductase subunit I, chloroplastic (166 aa).

2 consecutive 4Fe-4S ferredoxin-type domains span residues Gly55–Lys84 and Leu95–Glu124. [4Fe-4S] cluster is bound by residues Cys64, Cys67, Cys70, Cys74, Cys104, Cys107, Cys110, and Cys114.

Belongs to the complex I 23 kDa subunit family. In terms of assembly, NDH is composed of at least 16 different subunits, 5 of which are encoded in the nucleus. Requires [4Fe-4S] cluster as cofactor.

Its subcellular location is the plastid. It localises to the chloroplast thylakoid membrane. The catalysed reaction is a plastoquinone + NADH + (n+1) H(+)(in) = a plastoquinol + NAD(+) + n H(+)(out). It catalyses the reaction a plastoquinone + NADPH + (n+1) H(+)(in) = a plastoquinol + NADP(+) + n H(+)(out). NDH shuttles electrons from NAD(P)H:plastoquinone, via FMN and iron-sulfur (Fe-S) centers, to quinones in the photosynthetic chain and possibly in a chloroplast respiratory chain. The immediate electron acceptor for the enzyme in this species is believed to be plastoquinone. Couples the redox reaction to proton translocation, and thus conserves the redox energy in a proton gradient. This chain is NAD(P)H-quinone oxidoreductase subunit I, chloroplastic, found in Oblivia mikanioides (Salmea mikanioides).